Here is a 401-residue protein sequence, read N- to C-terminus: Riboflavin biosynthesis protein RibBA (401 aa).

The tract at residues M1 to K203 is DHBP synthase. D-ribulose 5-phosphate-binding positions include R30–E31, D35, R142–T146, and E166. E31 contributes to the Mg(2+) binding site. H145 lines the Mg(2+) pocket. The tract at residues H204–F401 is GTP cyclohydrolase II. R254–E258 contacts GTP. Residues C259, C270, and C272 each coordinate Zn(2+). Residues Q275, E297–R299, and T319 each bind GTP. D331 serves as the catalytic Proton acceptor; for GTP cyclohydrolase activity. Catalysis depends on R333, which acts as the Nucleophile; for GTP cyclohydrolase activity. GTP is bound by residues T354 and K359.

In the N-terminal section; belongs to the DHBP synthase family. It in the C-terminal section; belongs to the GTP cyclohydrolase II family. Mg(2+) serves as cofactor. Requires Mn(2+) as cofactor. It depends on Zn(2+) as a cofactor.

The enzyme catalyses D-ribulose 5-phosphate = (2S)-2-hydroxy-3-oxobutyl phosphate + formate + H(+). It catalyses the reaction GTP + 4 H2O = 2,5-diamino-6-hydroxy-4-(5-phosphoribosylamino)-pyrimidine + formate + 2 phosphate + 3 H(+). It functions in the pathway cofactor biosynthesis; riboflavin biosynthesis; 2-hydroxy-3-oxobutyl phosphate from D-ribulose 5-phosphate: step 1/1. The protein operates within cofactor biosynthesis; riboflavin biosynthesis; 5-amino-6-(D-ribitylamino)uracil from GTP: step 1/4. Functionally, catalyzes the conversion of D-ribulose 5-phosphate to formate and 3,4-dihydroxy-2-butanone 4-phosphate. Its function is as follows. Catalyzes the conversion of GTP to 2,5-diamino-6-ribosylamino-4(3H)-pyrimidinone 5'-phosphate (DARP), formate and pyrophosphate. This is Riboflavin biosynthesis protein RibBA from Actinobacillus pleuropneumoniae serotype 5b (strain L20).